Reading from the N-terminus, the 141-residue chain is Galactose-6-phosphate isomerase subunit LacA (141 aa).

Belongs to the LacAB/RpiB family. In terms of assembly, heteromultimeric protein consisting of LacA and LacB.

It carries out the reaction aldehydo-D-galactose 6-phosphate = keto-D-tagatose 6-phosphate. The protein operates within carbohydrate metabolism; D-galactose 6-phosphate degradation; D-tagatose 6-phosphate from D-galactose 6-phosphate: step 1/1. The sequence is that of Galactose-6-phosphate isomerase subunit LacA from Streptococcus pneumoniae (strain P1031).